Consider the following 618-residue polypeptide: 1-deoxy-D-xylulose-5-phosphate synthase (618 aa).

Thiamine diphosphate is bound by residues H73 and 114 to 116 (GHS). Residue D145 participates in Mg(2+) binding. Thiamine diphosphate contacts are provided by residues 146-147 (GA), N174, Y284, and E364. N174 provides a ligand contact to Mg(2+).

It belongs to the transketolase family. DXPS subfamily. In terms of assembly, homodimer. Requires Mg(2+) as cofactor. Thiamine diphosphate serves as cofactor.

It catalyses the reaction D-glyceraldehyde 3-phosphate + pyruvate + H(+) = 1-deoxy-D-xylulose 5-phosphate + CO2. It functions in the pathway metabolic intermediate biosynthesis; 1-deoxy-D-xylulose 5-phosphate biosynthesis; 1-deoxy-D-xylulose 5-phosphate from D-glyceraldehyde 3-phosphate and pyruvate: step 1/1. In terms of biological role, catalyzes the acyloin condensation reaction between C atoms 2 and 3 of pyruvate and glyceraldehyde 3-phosphate to yield 1-deoxy-D-xylulose-5-phosphate (DXP). The sequence is that of 1-deoxy-D-xylulose-5-phosphate synthase from Clostridium beijerinckii (strain ATCC 51743 / NCIMB 8052) (Clostridium acetobutylicum).